The following is a 122-amino-acid chain: Mth938 domain-containing protein (122 aa).

Positions 6 to 122 (IASLSWGQMK…RVGGVFHSTC (117 aa)) are MTH138-like domain.

It belongs to the AAMDC family.

It is found in the cytoplasm. In terms of biological role, may play a role in preadipocyte differentiation and adipogenesis. This chain is Mth938 domain-containing protein (AAMDC), found in Homo sapiens (Human).